Reading from the N-terminus, the 457-residue chain is uncharacterized protein (457 aa).

This is an uncharacterized protein from Synechocystis sp. (strain ATCC 27184 / PCC 6803 / Kazusa).